We begin with the raw amino-acid sequence, 246 residues long: MTHSNRMLLGVNIDHVATLRQARGTRYPDPVKAALDAEEAGADGITVHLREDRRHIQERDVVLLKDVLQTRMNFEMGVTEEMMAFAEKIRPAHICLVPETRQELTTEGGLDVAGQEARIKAAVERLARTGAEVSLFIDADERQIEASRRVGAPAIELHTGRYADAETPTEVAEELKRIVEGVAFGVGHGLIVNAGHGLHYHNVEAVAAIKGINELNIGHALVAHALFVGFKAAVAEMKALIVAASR.

Asparagine 12 contributes to the 3-amino-2-oxopropyl phosphate binding site. 14–15 is a 1-deoxy-D-xylulose 5-phosphate binding site; it reads DH. Arginine 23 contacts 3-amino-2-oxopropyl phosphate. The Proton acceptor role is filled by histidine 48. 1-deoxy-D-xylulose 5-phosphate-binding residues include arginine 50 and histidine 55. The active-site Proton acceptor is the glutamate 75. A 1-deoxy-D-xylulose 5-phosphate-binding site is contributed by threonine 105. Histidine 196 acts as the Proton donor in catalysis. 3-amino-2-oxopropyl phosphate is bound by residues glycine 197 and 218-219; that span reads GH.

This sequence belongs to the PNP synthase family. As to quaternary structure, homooctamer; tetramer of dimers.

Its subcellular location is the cytoplasm. It catalyses the reaction 3-amino-2-oxopropyl phosphate + 1-deoxy-D-xylulose 5-phosphate = pyridoxine 5'-phosphate + phosphate + 2 H2O + H(+). It functions in the pathway cofactor biosynthesis; pyridoxine 5'-phosphate biosynthesis; pyridoxine 5'-phosphate from D-erythrose 4-phosphate: step 5/5. Catalyzes the complicated ring closure reaction between the two acyclic compounds 1-deoxy-D-xylulose-5-phosphate (DXP) and 3-amino-2-oxopropyl phosphate (1-amino-acetone-3-phosphate or AAP) to form pyridoxine 5'-phosphate (PNP) and inorganic phosphate. The protein is Pyridoxine 5'-phosphate synthase of Pseudomonas putida (strain ATCC 47054 / DSM 6125 / CFBP 8728 / NCIMB 11950 / KT2440).